Here is a 504-residue protein sequence, read N- to C-terminus: L-amino-acid oxidase (504 aa).

Positions Met-1–Cys-18 are cleaved as a signal peptide. Cys-28 and Cys-191 form a disulfide bridge. FAD-binding positions include Met-61–Ser-62, Glu-81–Ala-82, Arg-89, and Gly-105–Arg-108. Arg-108 lines the substrate pocket. A glycan (N-linked (GlcNAc...) asparagine) is linked at Asn-190. His-241 contacts substrate. Val-279 lines the FAD pocket. A disulfide bridge links Cys-349 with Cys-430. N-linked (GlcNAc...) asparagine glycosylation occurs at Asn-379. Tyr-390 contacts substrate. FAD is bound by residues Glu-475 and Gly-482–Thr-487. Residue Gly-482–Trp-483 coordinates substrate.

This sequence belongs to the flavin monoamine oxidase family. FIG1 subfamily. In terms of assembly, homodimer; non-covalently linked. It depends on FAD as a cofactor. As to expression, expressed by the venom gland.

It localises to the secreted. The enzyme catalyses an L-alpha-amino acid + O2 + H2O = a 2-oxocarboxylate + H2O2 + NH4(+). It catalyses the reaction L-leucine + O2 + H2O = 4-methyl-2-oxopentanoate + H2O2 + NH4(+). Its function is as follows. Catalyzes an oxidative deamination of predominantly hydrophobic and aromatic L-amino acids, thus producing hydrogen peroxide that may contribute to the diverse toxic effects of this enzyme. Shows activity on L-Leu. Exhibits diverse biological activities, such as hemorrhage, hemolysis, edema, antibacterial and antiparasitic activities, as well as regulation of platelet aggregation. Its effect on platelets is controversial, since it either induces aggregation or inhibits agonist-induced aggregation. These different effects are probably due to different experimental conditions. This protein induces apoptosis of cultured HeLa cells. The protein is L-amino-acid oxidase of Gloydius halys (Chinese water mocassin).